The chain runs to 324 residues: MSVNLWAPSASIATLKQRAVILRSIREFFYARNVMEVETPSLSGASVTDIHLVSFNTRFVGPGHASGLELYLQTSPEFAMKRLLAAGSGPIFQLCKAFRNEEAGSHHNPEFTMLEWYRPGFDEFALMAEIDELMQLILDVAPSERLTYQHAFEQVLGLDPLTASLEQLQQLACEQGFADIAKNETHRDTLLQLLFCMKVEPTIGQHKPCFVYHFPASQAALAQICDHDSRVAGRFELYYKNMELANGFNELTNATEQAKRFNDDNEYRKQNGLKQVPMDKHLIAALEHGLAPCAGVALGIDRLVMLATQKSNIKEVIAFDVTRA.

75 to 77 (SPE) lines the substrate pocket. ATP is bound by residues 99–101 (RNE) and Asn-108. Tyr-117 provides a ligand contact to substrate. Position 243–244 (243–244 (EL)) interacts with ATP. A substrate-binding site is contributed by Glu-250. Position 299 (Gly-299) interacts with ATP.

Belongs to the class-II aminoacyl-tRNA synthetase family. EpmA subfamily. As to quaternary structure, homodimer.

The enzyme catalyses D-beta-lysine + L-lysyl-[protein] + ATP = N(6)-((3R)-3,6-diaminohexanoyl)-L-lysyl-[protein] + AMP + diphosphate + H(+). With EpmB is involved in the beta-lysylation step of the post-translational modification of translation elongation factor P (EF-P). Catalyzes the ATP-dependent activation of (R)-beta-lysine produced by EpmB, forming a lysyl-adenylate, from which the beta-lysyl moiety is then transferred to the epsilon-amino group of a conserved specific lysine residue in EF-P. The sequence is that of Elongation factor P--(R)-beta-lysine ligase from Pseudoalteromonas translucida (strain TAC 125).